Here is a 337-residue protein sequence, read N- to C-terminus: MDSFKPYLAKVATGAALTREEARTAFDHLLSGEVTHAQAGAFLMALRVRGEAQDEIVGAAGALRERMVRVVAPAGAIDIVGTGGDHSGSYNVSTLASILTAACGVPVAKHGNRAASSRSGAADVLAALGVRLGLDPEGLARCLEEAGLCFMFAQAHHASMRHVAPVRVELGTRTLFNLLGPLCNPAGVAGQLLGVYAGSLAEPLTRVLADLGSRRVWTVHGSDGLDEITTTGPTAVVALEDGAIRHFTIDPREVGLALASPEDLRGADPEHNAAALRAVLDGARTPYRDIAVLNAGAALVVAGACAGLGEGVARAAQAIETGAARAVLARLVAVSNA.

5-phospho-alpha-D-ribose 1-diphosphate contacts are provided by residues glycine 81, 84 to 85, serine 89, 91 to 94, 109 to 117, and alanine 121; these read GD, NVST, and KHGNRAASS. Residue glycine 81 coordinates anthranilate. Serine 93 lines the Mg(2+) pocket. Asparagine 112 is a binding site for anthranilate. Residue arginine 167 coordinates anthranilate. Mg(2+)-binding residues include aspartate 226 and glutamate 227.

The protein belongs to the anthranilate phosphoribosyltransferase family. Homodimer. The cofactor is Mg(2+).

It carries out the reaction N-(5-phospho-beta-D-ribosyl)anthranilate + diphosphate = 5-phospho-alpha-D-ribose 1-diphosphate + anthranilate. The protein operates within amino-acid biosynthesis; L-tryptophan biosynthesis; L-tryptophan from chorismate: step 2/5. Its function is as follows. Catalyzes the transfer of the phosphoribosyl group of 5-phosphorylribose-1-pyrophosphate (PRPP) to anthranilate to yield N-(5'-phosphoribosyl)-anthranilate (PRA). The protein is Anthranilate phosphoribosyltransferase of Methylobacterium sp. (strain 4-46).